The sequence spans 209 residues: Large ribosomal subunit protein uL3 (209 aa).

The segment at 141–163 is disordered; sequence RAVGSMGASSDPSRTFKNKRMPG.

Belongs to the universal ribosomal protein uL3 family. In terms of assembly, part of the 50S ribosomal subunit. Forms a cluster with proteins L14 and L19.

In terms of biological role, one of the primary rRNA binding proteins, it binds directly near the 3'-end of the 23S rRNA, where it nucleates assembly of the 50S subunit. This is Large ribosomal subunit protein uL3 from Clostridium botulinum (strain Langeland / NCTC 10281 / Type F).